The following is a 298-amino-acid chain: ATP synthase F(1) complex subunit gamma, mitochondrial (298 aa).

The transit peptide at 1–25 (MFSRAGVAGLSAWTVQPQWIQVRNM) directs the protein to the mitochondrion. K39 bears the N6-acetyllysine mark. Position 49 is an N6-succinyllysine (K49). N6-acetyllysine is present on K55. K115 carries the N6-acetyllysine; alternate modification. K115 bears the N6-succinyllysine; alternate mark. S146 bears the Phosphoserine mark. Residue K154 is modified to N6-acetyllysine; alternate. Residue K154 is modified to N6-succinyllysine; alternate. At K197 the chain carries N6-acetyllysine. N6-succinyllysine is present on K270.

It belongs to the ATPase gamma chain family. In terms of assembly, component of the ATP synthase complex composed at least of ATP5F1A/subunit alpha, ATP5F1B/subunit beta, ATP5MC1/subunit c (homooctomer), MT-ATP6/subunit a, MT-ATP8/subunit 8, ATP5ME/subunit e, ATP5MF/subunit f, ATP5MG/subunit g, ATP5MK/subunit k, ATP5MJ/subunit j, ATP5F1C/subunit gamma, ATP5F1D/subunit delta, ATP5F1E/subunit epsilon, ATP5PF/subunit F6, ATP5PB/subunit b, ATP5PD/subunit d, ATP5PO/subunit OSCP. ATP synthase complex consists of a soluble F(1) head domain (subunits alpha(3) and beta(3)) - the catalytic core - and a membrane F(0) domain - the membrane proton channel (subunits c, a, 8, e, f, g, k and j). These two domains are linked by a central stalk (subunits gamma, delta, and epsilon) rotating inside the F1 region and a stationary peripheral stalk (subunits F6, b, d, and OSCP). Interacts with FLVCR2; this interaction occurs in the absence of heme and is disrupted upon heme binding.

The protein localises to the mitochondrion inner membrane. Functionally, subunit gamma, of the mitochondrial membrane ATP synthase complex (F(1)F(0) ATP synthase or Complex V) that produces ATP from ADP in the presence of a proton gradient across the membrane which is generated by electron transport complexes of the respiratory chain. ATP synthase complex consist of a soluble F(1) head domain - the catalytic core - and a membrane F(1) domain - the membrane proton channel. These two domains are linked by a central stalk rotating inside the F(1) region and a stationary peripheral stalk. During catalysis, ATP synthesis in the catalytic domain of F(1) is coupled via a rotary mechanism of the central stalk subunits to proton translocation. In vivo, can only synthesize ATP although its ATP hydrolase activity can be activated artificially in vitro. With the central stalk subunit delta, is essential for the biogenesis of F(1) catalytic part of the ATP synthase complex namely in the formation of F1 assembly intermediate. The polypeptide is ATP synthase F(1) complex subunit gamma, mitochondrial (Bos taurus (Bovine)).